The sequence spans 256 residues: Imidazole glycerol phosphate synthase subunit HisF (256 aa).

Active-site residues include Asp12 and Asp131.

This sequence belongs to the HisA/HisF family. In terms of assembly, heterodimer of HisH and HisF.

It is found in the cytoplasm. It carries out the reaction 5-[(5-phospho-1-deoxy-D-ribulos-1-ylimino)methylamino]-1-(5-phospho-beta-D-ribosyl)imidazole-4-carboxamide + L-glutamine = D-erythro-1-(imidazol-4-yl)glycerol 3-phosphate + 5-amino-1-(5-phospho-beta-D-ribosyl)imidazole-4-carboxamide + L-glutamate + H(+). It participates in amino-acid biosynthesis; L-histidine biosynthesis; L-histidine from 5-phospho-alpha-D-ribose 1-diphosphate: step 5/9. IGPS catalyzes the conversion of PRFAR and glutamine to IGP, AICAR and glutamate. The HisF subunit catalyzes the cyclization activity that produces IGP and AICAR from PRFAR using the ammonia provided by the HisH subunit. The chain is Imidazole glycerol phosphate synthase subunit HisF from Pseudomonas fluorescens (strain SBW25).